Reading from the N-terminus, the 945-residue chain is Netrin receptor UNC5B (945 aa).

The first 26 residues, 1–26 (MRARSGVRSALLLALLLCWDPTPSLA), serve as a signal peptide directing secretion. At 27 to 377 (GVDSAGQVLP…LETSGDVALY (351 aa)) the chain is on the extracellular side. The Ig-like domain maps to 48 to 145 (PYFLLEPQDA…SGTTKSRRAY (98 aa)). Cystine bridges form between Cys-69–Cys-130, Cys-81–Cys-128, Cys-174–Cys-225, Cys-258–Cys-295, Cys-262–Cys-299, Cys-273–Cys-285, Cys-314–Cys-348, Cys-318–Cys-353, and Cys-326–Cys-338. Residues 153-242 (KNFDQEPLAK…KRRSTTATVI (90 aa)) enclose the Ig-like C2-type domain. An N-linked (GlcNAc...) asparagine glycan is attached at Asn-222. TSP type-1 domains follow at residues 246-300 (NGGW…TVCP) and 302-354 (DGAW…GLCV). Asn-347 carries an N-linked (GlcNAc...) asparagine glycan. A helical transmembrane segment spans residues 378–398 (AGLVVAVFVVVAVLMAVGVIV). Residues 399-945 (YRRNCRDFDT…LVAMATDGDC (547 aa)) are Cytoplasmic-facing. A lipid anchor (S-palmitoyl cysteine) is attached at Cys-403. Positions 543-686 (SSVSGTFGCL…LGTYVFMGES (144 aa)) constitute a ZU5 domain. Tyr-581 carries the phosphotyrosine modification. The interval 689 to 838 (RSAVKRLQLA…AETPAGSLDA (150 aa)) is UPA domain. Residues 707–725 (SLEYSLRVYCLEDTPVALK) are interaction with DCC. Residues 865–943 (KICSSLDAPN…EMLVAMATDG (79 aa)) enclose the Death domain.

Belongs to the unc-5 family. As to quaternary structure, interacts with the cytoplasmic part of DCC. Interacts with GNAI2 via its cytoplasmic part. Interacts (via death domain) with DAPK1 (via death domain). Interacts (via extracellular domain) with FLRT2 and FLRT3 (via extracellular domain), but has higher affinity for FLRT3. Identified in a complex with FLRT3 and ADGRL3; does not interact with ADGRL3 by itself. In terms of processing, phosphorylated on cytoplasmic tyrosine residues. Palmitoylation is required for pro-apoptotic activity, but not for location at lipid rafts. Post-translationally, proteolytically cleaved by caspases during apoptosis. The cleavage does not take place when the receptor is associated with netrin ligand. Its cleavage by caspases is required to induce apoptosis. Highly expressed in brain. Expressed in lung during late development. Expressed during early blood vessel formation, in the semicircular canal and in a dorsal to ventral gradient in the retina.

It is found in the cell membrane. The protein resides in the membrane raft. Functionally, receptor for netrin required for axon guidance. Mediates axon repulsion of neuronal growth cones in the developing nervous system upon ligand binding. Axon repulsion in growth cones may be caused by its association with DCC that may trigger signaling for repulsion. Functions as a netrin receptor that negatively regulates vascular branching during angiogenesis. Mediates retraction of tip cell filopodia on endothelial growth cones in response to netrin. It also acts as a dependence receptor required for apoptosis induction when not associated with netrin ligand. Mediates apoptosis by activating DAPK1. In the absence of NTN1, activates DAPK1 by reducing its autoinhibitory phosphorylation at Ser-308 thereby increasing its catalytic activity. This Mus musculus (Mouse) protein is Netrin receptor UNC5B (Unc5b).